Consider the following 444-residue polypeptide: Phosphoglucosamine mutase (444 aa).

Ser-101 (phosphoserine intermediate) is an active-site residue. Ser-101, Asp-239, Asp-241, and Asp-243 together coordinate Mg(2+). Ser-101 is modified (phosphoserine).

The protein belongs to the phosphohexose mutase family. It depends on Mg(2+) as a cofactor. Activated by phosphorylation.

The enzyme catalyses alpha-D-glucosamine 1-phosphate = D-glucosamine 6-phosphate. Its function is as follows. Catalyzes the conversion of glucosamine-6-phosphate to glucosamine-1-phosphate. This Alcanivorax borkumensis (strain ATCC 700651 / DSM 11573 / NCIMB 13689 / SK2) protein is Phosphoglucosamine mutase.